The following is a 758-amino-acid chain: Spastin (758 aa).

Residues 1 to 99 form a disordered region; the sequence is MVRTKNQSSS…PTTCSPRSGH (99 aa). Topologically, residues 1 to 121 are cytoplasmic; the sequence is MVRTKNQSSS…KQNLYVVSFP (121 aa). Residues 1-210 form a required for localization to punctate cytoplasmic foci region; it reads MVRTKNQSSS…RPIQPLEMAA (210 aa). Composition is skewed to low complexity over residues 8–29, 43–58, 66–76, and 85–95; these read SSSSSASSSSTKSPIKSSSATG, RSSSASNVAAVVAGGS, SSNRRSPGSSP, and TDDLTPTTCSP. Positions 122 to 142 form an intramembrane region, helical; the sequence is IIFLFNVLRSLIYQLFCIFRY. The Cytoplasmic segment spans residues 143-758; the sequence is LYGASTKVIY…WSQDYGDITI (616 aa). Composition is skewed to polar residues over residues 169–180 and 189–198; these read SKEQQQSLNHPS and QEQQLSNQPQ. The disordered stretch occupies residues 169 to 221; sequence SKEQQQSLNHPSELNRDSDGQEQQLSNQPQRFRPIQPLEMAANRPGGGYSPGP. Residues 208 to 758 form a sufficient for interaction with microtubules and microtubule severing region; the sequence is MAANRPGGGY…WSQDYGDITI (551 aa). One can recognise an MIT domain in the interval 233-308; it reads HRRAFEYISK…SMARDRLHFL (76 aa). Disordered stretches follow at residues 353–376 and 390–454; these read RVRSSGYGPKATTGAQPTASGRKL and NKSQ…ASTP. Polar residues-rich tracts occupy residues 390-406 and 425-454; these read NKSQTLPRNLGSKTSVG and QFSSGRNTPPQRSRTPINNNGPSGSGASTP. The segment at 443–455 is required for interaction with microtubules; it reads NNGPSGSGASTPV. 523–530 contacts ATP; the sequence is GPPGNGKT.

This sequence belongs to the AAA ATPase family. Spastin subfamily. Homohexamer. The homohexamer is stabilized by ATP-binding. The homohexamer may adopt a ring conformation through which microtubules pass prior to being severed. Interacts with microtubules. Interacts with atl; may be involved in microtubule dynamics.

It is found in the membrane. It localises to the cytoplasm. The protein resides in the cytoskeleton. The protein localises to the microtubule organizing center. Its subcellular location is the centrosome. It is found in the chromosome. It localises to the lipid droplet. The enzyme catalyses n ATP + n H2O + a microtubule = n ADP + n phosphate + (n+1) alpha/beta tubulin heterodimers.. ATP-dependent microtubule severing protein. Stimulates microtubule minus-end depolymerization and poleward microtubule flux in the mitotic spindle. Regulates microtubule stability in the neuromuscular junction synapse. Involved in lipid metabolism by regulating the size and distribution of lipid droplets. Involved in axon regeneration by regulating microtubule severing. The protein is Spastin of Drosophila yakuba (Fruit fly).